The sequence spans 242 residues: Ethanolamine ammonia-lyase small subunit (242 aa).

Residues V155 and E176 each contribute to the adenosylcob(III)alamin site.

It belongs to the EutC family. In terms of assembly, the basic unit is a heterodimer which dimerizes to form tetramers. The heterotetramers trimerize; 6 large subunits form a core ring with 6 small subunits projecting outwards. Requires adenosylcob(III)alamin as cofactor.

The protein resides in the bacterial microcompartment. It carries out the reaction ethanolamine = acetaldehyde + NH4(+). Its pathway is amine and polyamine degradation; ethanolamine degradation. Catalyzes the deamination of various vicinal amino-alcohols to oxo compounds. Allows this organism to utilize ethanolamine as the sole source of nitrogen and carbon in the presence of external vitamin B12. This chain is Ethanolamine ammonia-lyase small subunit, found in Clostridium acetobutylicum (strain ATCC 824 / DSM 792 / JCM 1419 / IAM 19013 / LMG 5710 / NBRC 13948 / NRRL B-527 / VKM B-1787 / 2291 / W).